A 929-amino-acid polypeptide reads, in one-letter code: MGGSCAQRRRAGPRQVLFPLLLPLFYPTLCEPIRYSIPEELAKGSVVGNLAKDLGLSVLDVSARELRVSAEKLHFSVDAQSGDLLVKDRIDREQICKERRRCELQLEAVVENPLNIFHIIVVIEDVNDHAPQFQKDEINLEISESVSLGMGTILESAEDPDISMNSLSKYQLSPNEYFSLVEKDNPDGGKYPELVLQKTLDRETQSAHHLVLTALDGGDPPRSGTAQIRILVIDANDNPPVFSQDVYRVSLREDVPPGTSILRVKATDQDEGINSEITYSFFGVADKAQHVFSLDYTTGNILTQQPLDFEEVERYTMNIEAKDRGSLSTRCKVIVEVVDENDNSPEIIITSLSDQIMEDSPPGVVVALFKTRDRDSGENGEVRCSLSRGVPFKIHSSSNNYYKLVTDEALDREQTPEYNVTIAATDRGKPPLSSSKTITLHITDVNDNAPVFGQSAYLVHVPENNQPGASIAQVSASDPDFGPNGRVSYSLIASDLESRTLSSYVSVSAQSGVVFAQRAFDHEQLRTFELTLQARDQGSPALSANVSLRVLVGDRNDNAPRVLYPALGPDGSALFDTVPRAAQPGYLVTKVVAVDADSGHNAWLSYHVVQASEPGLFSLGLRTGEVRMVRALGDKDLVRQRLLVAVRDGGQPPLSATATLHLVFADSLQEVLPDFSDHPTPSDSQAEMQFYLVVALALISVLFLLAVILAIALRLRQSFSPTAGDCFESVLCSKSGPVGPPNYSEGTLPYAYNFCVPGDQMNPEFNFFASVDHCPATQDNLNKDSMLLASILTPSVEADKKILKQQAPPNTDWRFSQAQRPGTSGSQNGDDTGTWPNNQFDTEMLQAMILASASEAADGSSTLGGGAGTMGLSARYGPQFTLQHVPDYRQNVYIPGSNATLTNAAGKRDGKAPAGGNGNKKKSGKKEKK.

An N-terminal signal peptide occupies residues 1–30 (MGGSCAQRRRAGPRQVLFPLLLPLFYPTLC). Cadherin domains follow at residues 31–133 (EPIR…APQF), 134–242 (QKDE…PPVF), 243–347 (SQDV…SPEI), 348–452 (IITS…APVF), 453–562 (GQSA…APRV), and 570–675 (DGSA…LPDF). At 31 to 691 (EPIRYSIPEE…SDSQAEMQFY (661 aa)) the chain is on the extracellular side. Asn419 and Asn545 each carry an N-linked (GlcNAc...) asparagine glycan. The chain crosses the membrane as a helical span at residues 692 to 712 (LVVALALISVLFLLAVILAIA). Residues 713-929 (LRLRQSFSPT…KKKSGKKEKK (217 aa)) lie on the Cytoplasmic side of the membrane. Disordered stretches follow at residues 806–838 (QAPP…WPNN) and 899–929 (ATLT…KEKK). Positions 807–838 (APPNTDWRFSQAQRPGTSGSQNGDDTGTWPNN) are enriched in polar residues. The span at 919–929 (NKKKSGKKEKK) shows a compositional bias: basic residues.

It is found in the cell membrane. In terms of biological role, potential calcium-dependent cell-adhesion protein. May be involved in the establishment and maintenance of specific neuronal connections in the brain. This is Protocadherin gamma-B7 (PCDHGB7) from Pan troglodytes (Chimpanzee).